Reading from the N-terminus, the 728-residue chain is MIPELIKENLFLEDGRALSIETGELARKANGSAVVRMGNTSLLATVVISKESKEDFKFIPLTIDYREKYSAGGKIPGGYIKREGRPYDEEILTMRLVDRLLRPLFKDNYYNEIQIMISLLSYDINVLPDGLAGLVASTAVSISEISFQGPVSTVRIIRINDAFIINPGIEEIKKSDFYLDLDLDLDLIVGGTNNYIILVEGEMREISEIEMMEAIVKAHKYIQLQIEAQISLITKNKKFIKKKLYKIELYNYYYKYINFNLNVFYIKEKIKFISYEEIDYIYKSCLFKQKRSNKIYNILKKIKFHFYNESIVINNLEIDIIFDEIKKEIIKNILFKENIRLDGRSLDDIRNICSQVDCLPGVHGSAIFTRGETQALSTVTLGSSLDVNKIDNAIMRAKQRFYLHYNFPPFSTGEIKLLKGVSRREIGHGNLAQRALKNIIPTTYTIRVVSDVLESNGSSSMATVCASTLALMDSGIIVKRPVSGISMGLIMNYLTGEAIILSDLLGDEDYIGDMDFKITGTEYGMTACQMDIKISGITYDVLSYTIFKAKKGLLFIIKKMLTTLSCPRKSLNITATKIYTFYIPKKLIGAVIGSGGKRIQEIQVSTETNIKIKEKNYLGVIEILGKNETKLKIAILKIKNITFVPKVGTIYKAKVKNIKKFGVFVKISKYLEGLLHIYEISWLTKVESFIRKGDIISVKYLGKNNKFRKIKLSHKMIFSRYYLNKNLK.

Asp-509 and Asp-515 together coordinate Mg(2+). The region spanning 576-638 (TKIYTFYIPK…TKLKIAILKI (63 aa)) is the KH domain. Residues 648–715 (GTIYKAKVKN…KFRKIKLSHK (68 aa)) form the S1 motif domain.

The protein belongs to the polyribonucleotide nucleotidyltransferase family. Mg(2+) is required as a cofactor.

Its subcellular location is the cytoplasm. The enzyme catalyses RNA(n+1) + phosphate = RNA(n) + a ribonucleoside 5'-diphosphate. Functionally, involved in mRNA degradation. Catalyzes the phosphorolysis of single-stranded polyribonucleotides processively in the 3'- to 5'-direction. The protein is Polyribonucleotide nucleotidyltransferase of Karelsulcia muelleri (strain GWSS) (Sulcia muelleri).